Here is a 118-residue protein sequence, read N- to C-terminus: Small ribosomal subunit protein uS13 (118 aa).

Residues 92-118 form a disordered region; the sequence is RRGLPVRGQRTKTNARTRKGPRKPIKK.

Belongs to the universal ribosomal protein uS13 family. In terms of assembly, part of the 30S ribosomal subunit. Forms a loose heterodimer with protein S19. Forms two bridges to the 50S subunit in the 70S ribosome.

Functionally, located at the top of the head of the 30S subunit, it contacts several helices of the 16S rRNA. In the 70S ribosome it contacts the 23S rRNA (bridge B1a) and protein L5 of the 50S subunit (bridge B1b), connecting the 2 subunits; these bridges are implicated in subunit movement. Contacts the tRNAs in the A and P-sites. This chain is Small ribosomal subunit protein uS13, found in Yersinia pestis.